The sequence spans 179 residues: Large ribosomal subunit protein uL6 (179 aa).

It belongs to the universal ribosomal protein uL6 family. As to quaternary structure, part of the 50S ribosomal subunit.

This protein binds to the 23S rRNA, and is important in its secondary structure. It is located near the subunit interface in the base of the L7/L12 stalk, and near the tRNA binding site of the peptidyltransferase center. The polypeptide is Large ribosomal subunit protein uL6 (Bacillus anthracis).